A 1044-amino-acid polypeptide reads, in one-letter code: DEMETER-like protein 3 (1044 aa).

Residues 1-15 (MLTDGSQHTYQNGET) show a composition bias toward polar residues. Residues 1-107 (MLTDGSQHTY…KPRNPATTRL (107 aa)) are disordered. Residues 16–30 (KNSKEHERKCDESAH) show a composition bias toward basic and acidic residues. Over residues 38 to 53 (THKKKEKKNSKEKHGI) the composition is skewed to basic residues. The span at 54–66 (KHSESEHLQDDIS) shows a compositional bias: basic and acidic residues. Basic residues predominate over residues 71–89 (GKGRRRNSKGTPKKLRFNR). A DEMETER region spans residues 348 to 445 (KVNLDPETIK…AFMSVAAKFP (98 aa)). Residues cysteine 678, cysteine 685, cysteine 688, and cysteine 694 each coordinate [4Fe-4S] cluster. The segment at 1024-1044 (VRRLHTPPDERGPKFMSDDDI) is disordered.

The protein belongs to the DNA glycosylase family. DEMETER subfamily. [4Fe-4S] cluster serves as cofactor.

Its subcellular location is the nucleus. Its function is as follows. Potential transcriptional activator that may act by nicking the target promoter. Catalyzes the release of 5-methylcytosine (5-meC) from DNA by a glycosylase/lyase mechanism. The chain is DEMETER-like protein 3 (DML3) from Arabidopsis thaliana (Mouse-ear cress).